Consider the following 429-residue polypeptide: Mannose-6-phosphate isomerase (429 aa).

N-acetylserine is present on serine 2. Serine 107 is modified (phosphoserine). Residues glutamine 109, histidine 111, glutamate 136, and histidine 281 each coordinate Zn(2+). The active site involves arginine 300.

The protein belongs to the mannose-6-phosphate isomerase type 1 family. As to quaternary structure, monomer. Zn(2+) serves as cofactor.

The protein localises to the cytoplasm. The catalysed reaction is D-mannose 6-phosphate = D-fructose 6-phosphate. It functions in the pathway nucleotide-sugar biosynthesis; GDP-alpha-D-mannose biosynthesis; alpha-D-mannose 1-phosphate from D-fructose 6-phosphate: step 1/2. With respect to regulation, can be inhibited by an excess of zinc. Functionally, involved in the synthesis of the GDP-mannose and dolichol-phosphate-mannose required for a number of critical mannosyl transfer reactions. In Saccharomyces cerevisiae (strain ATCC 204508 / S288c) (Baker's yeast), this protein is Mannose-6-phosphate isomerase (PMI40).